The following is a 143-amino-acid chain: MAVERTLSIIKPDAVAKNVIGEIVTRFEKAGLSVVAMKMVHLSDEKAGGFYAEHKERPFFKDLVGFMTSGPVVVQVLEGEDAVAKNRDLMGATNPKEAEAGTIRADFAETIDANAVHGSDSTESAAREVAYFFSDEEVCPRAS.

6 residues coordinate ATP: K11, F59, R87, T93, R104, and N114. The Pros-phosphohistidine intermediate role is filled by H117.

Belongs to the NDK family. Homotetramer. Mg(2+) is required as a cofactor.

It localises to the cytoplasm. The enzyme catalyses a 2'-deoxyribonucleoside 5'-diphosphate + ATP = a 2'-deoxyribonucleoside 5'-triphosphate + ADP. It carries out the reaction a ribonucleoside 5'-diphosphate + ATP = a ribonucleoside 5'-triphosphate + ADP. Functionally, major role in the synthesis of nucleoside triphosphates other than ATP. The ATP gamma phosphate is transferred to the NDP beta phosphate via a ping-pong mechanism, using a phosphorylated active-site intermediate. The protein is Nucleoside diphosphate kinase of Alcanivorax borkumensis (strain ATCC 700651 / DSM 11573 / NCIMB 13689 / SK2).